The chain runs to 603 residues: Serine palmitoyltransferase 2 (603 aa).

Residues 90-107 (YYYVVATYLTYLVLIIIG) form a helical membrane-spanning segment. K398 carries the post-translational modification N6-(pyridoxal phosphate)lysine.

This sequence belongs to the class-II pyridoxal-phosphate-dependent aminotransferase family. As to quaternary structure, lcb1 and lcb2 encode essential subunits of the enzyme and form a heterodimer. Pyridoxal 5'-phosphate is required as a cofactor.

Its subcellular location is the cytoplasm. It localises to the endoplasmic reticulum. The protein resides in the membrane. It catalyses the reaction L-serine + hexadecanoyl-CoA + H(+) = 3-oxosphinganine + CO2 + CoA. The protein operates within lipid metabolism; sphingolipid metabolism. In terms of biological role, catalytic subunit of serine palmitoyltransferase (SPT), which catalyzes the committed step in the synthesis of sphingolipids, the condensation of serine with palmitoyl CoA to form the long chain base 3-ketosphinganine. This is Serine palmitoyltransferase 2 (lcb2) from Schizosaccharomyces pombe (strain 972 / ATCC 24843) (Fission yeast).